The following is a 198-amino-acid chain: Nucleoid occlusion factor SlmA (198 aa).

In terms of domain architecture, HTH tetR-type spans 10 to 70; the sequence is NRREEILQSL…SLIEFIEDSL (61 aa). Residues 33–52 constitute a DNA-binding region (H-T-H motif); sequence TTAKLAASVGVSEAALYRHF. The stretch at 117-144 forms a coiled coil; the sequence is EQDRLQGRINQLFERIEAQLRQVLREKR.

It belongs to the nucleoid occlusion factor SlmA family. Homodimer. Interacts with FtsZ.

The protein resides in the cytoplasm. Its subcellular location is the nucleoid. In terms of biological role, required for nucleoid occlusion (NO) phenomenon, which prevents Z-ring formation and cell division over the nucleoid. Acts as a DNA-associated cell division inhibitor that binds simultaneously chromosomal DNA and FtsZ, and disrupts the assembly of FtsZ polymers. SlmA-DNA-binding sequences (SBS) are dispersed on non-Ter regions of the chromosome, preventing FtsZ polymerization at these regions. The polypeptide is Nucleoid occlusion factor SlmA (Escherichia coli (strain 55989 / EAEC)).